A 230-amino-acid chain; its full sequence is UPF0173 metal-dependent hydrolase MM_2300 (230 aa).

The protein belongs to the UPF0173 family.

The protein is UPF0173 metal-dependent hydrolase MM_2300 of Methanosarcina mazei (strain ATCC BAA-159 / DSM 3647 / Goe1 / Go1 / JCM 11833 / OCM 88) (Methanosarcina frisia).